The primary structure comprises 419 residues: Vascular endothelial growth factor C (419 aa).

The first 31 residues, 1–31 (MHLLGFFSVACSLLAAALLPGPREAPAAAAA), serve as a signal peptide directing secretion. The propeptide at 32–111 (FESGLDLSDA…RTEETIKFAA (80 aa)) is or 102. Disulfide bonds link Cys131/Cys173, Cys162/Cys209, and Cys166/Cys211. N-linked (GlcNAc...) asparagine glycans are attached at residues Asn175, Asn205, and Asn240. The propeptide occupies 228-419 (SLPATLPQCQ…PSYWKRPQMS (192 aa)). 4 consecutive repeat copies span residues 280 to 295 (CGPNKELDEETCQCVC), 304 to 319 (CGPHKELDRNSCQCVC), 328 to 343 (CGANREFDENTCQCVC), and 347 to 362 (CPRNQPLNPGKCACEC). Residues 280-362 (CGPNKELDEE…LNPGKCACEC (83 aa)) form a 4 X 16 AA repeats of C-X(10)-C-X-C-X(1,3)-C region.

The protein belongs to the PDGF/VEGF growth factor family. Homodimer; non-covalent and antiparallel. Interacts with FLT4/VEGFR3; the interaction is required for FLT4/VEGFR3 homodimarization and activation. Post-translationally, undergoes a complex proteolytic maturation which generates a variety of processed secreted forms with increased activity toward VEGFR-3, but only the fully processed form could activate VEGFR-2. VEGF-C first form an antiparallel homodimer linked by disulfide bonds. Before secretion, a cleavage occurs between Arg-227 and Ser-228 producing a heterotetramer. The next extracellular step of the processing removes the N-terminal propeptide. Finally the mature VEGF-C is composed mostly of two VEGF homology domains (VHDs) bound by non-covalent interactions. Expressed in the spleen. Expressed in the lymph node, thymus, appendix and bone marrow. Expressed in the heart, placenta, skeletal muscle, ovary and small intestine. Expressed in the prostate, testis and colon.

Its subcellular location is the secreted. In terms of biological role, growth factor active in angiogenesis, and endothelial cell growth, stimulating their proliferation and migration and also has effects on the permeability of blood vessels. May function in angiogenesis of the venous and lymphatic vascular systems during embryogenesis, and also in the maintenance of differentiated lymphatic endothelium in adults. Binds and activates KDR/VEGFR2 and FLT4/VEGFR3 receptors. The chain is Vascular endothelial growth factor C (VEGFC) from Homo sapiens (Human).